Consider the following 314-residue polypeptide: Pathogenicity locus probable regulatory protein HrpR (314 aa).

One can recognise a Sigma-54 factor interaction domain in the interval 11 to 239 (TRWNVTALSA…LKSAANAICP (229 aa)). ATP is bound by residues 39-46 (GETGTGKD) and 101-110 (SNGGTLYLDE). The segment at residues 281–300 (FDAVLEELELPRRTLYHRMK) is a DNA-binding region (H-T-H motif).

In terms of biological role, member of the two-component regulatory system HrpR/HrpS that regulates the activation of the sigma factor hrpL which itself induces the expression of hprD as well as other hrp loci which are involved in plant pathogenicity, hrmA and avr genes. Probably interacts with sigma-54. This Pseudomonas syringae pv. syringae protein is Pathogenicity locus probable regulatory protein HrpR (hrpR).